The primary structure comprises 340 residues: Outer membrane protein U (340 aa).

A signal peptide spans 1 to 21; sequence MKKTLIALSVSAAAVATGVNA.

The protein belongs to the Gram-negative porin family. In terms of assembly, homotrimer.

The protein localises to the cell outer membrane. Forms pores that allow passive diffusion of small molecules across the outer membrane. This is Outer membrane protein U (ompU) from Vibrio vulnificus (strain CMCP6).